Consider the following 145-residue polypeptide: Large ribosomal subunit protein uL15 (145 aa).

The interval 1 to 52 (MFNLLKPKGASKRRKIVGRGPGSGLGKTSGRGQKGQKARNTSPRLGFEGGQT) is disordered. The span at 19 to 33 (RGPGSGLGKTSGRGQ) shows a compositional bias: gly residues.

It belongs to the universal ribosomal protein uL15 family. Part of the 50S ribosomal subunit.

In terms of biological role, binds to the 23S rRNA. In Borreliella burgdorferi (strain ATCC 35210 / DSM 4680 / CIP 102532 / B31) (Borrelia burgdorferi), this protein is Large ribosomal subunit protein uL15.